The following is a 213-amino-acid chain: Small ribosomal subunit protein uS5 (213 aa).

The region spanning 49-112 is the S5 DRBM domain; it reads LEEEVMDVNL…DNAKYNLIKV (64 aa).

The protein belongs to the universal ribosomal protein uS5 family. In terms of assembly, part of the 30S ribosomal subunit. Contacts protein S4.

Its function is as follows. With S4 and S12 plays an important role in translational accuracy. The polypeptide is Small ribosomal subunit protein uS5 (Methanobrevibacter smithii (strain ATCC 35061 / DSM 861 / OCM 144 / PS)).